The chain runs to 40 residues: uncharacterized protein (40 aa).

A signal peptide spans 1–27 (MFPADVILQCFGFSVGIALVGYVISLF).

This is an uncharacterized protein from Archaeoglobus fulgidus (strain ATCC 49558 / DSM 4304 / JCM 9628 / NBRC 100126 / VC-16).